Consider the following 306-residue polypeptide: MRVVFMGTPEFSVPILTAIIGHGYEVVAAYTQPPRPAGRRGLELTKSPVHEKAEQFGIPVFTPKSLKGAEEQDVFASLEADVAIVVAYGLLLPQAILDAPRLGCYNGHASLLPRWRGAAPIQRAIMAGDSETGMMIMKMDAGLDTGPVAMAEKVAITPDMTAGELHDRLSMIGADLMIRALGALERESLALQPQAEEGVTYAAKIDKAEARIDWSKPAQDVHNTIRGLSPFPGAWCEMEINGAVERVKLQRSALGEGSGEPGTVLDDRLTVACGEGAVRLVTLQRSGGKPLPAQEFLRGAQVSKVL.

110 to 113 (SLLP) serves as a coordination point for (6S)-5,6,7,8-tetrahydrofolate.

The protein belongs to the Fmt family.

It catalyses the reaction L-methionyl-tRNA(fMet) + (6R)-10-formyltetrahydrofolate = N-formyl-L-methionyl-tRNA(fMet) + (6S)-5,6,7,8-tetrahydrofolate + H(+). Its function is as follows. Attaches a formyl group to the free amino group of methionyl-tRNA(fMet). The formyl group appears to play a dual role in the initiator identity of N-formylmethionyl-tRNA by promoting its recognition by IF2 and preventing the misappropriation of this tRNA by the elongation apparatus. The sequence is that of Methionyl-tRNA formyltransferase from Brucella anthropi (strain ATCC 49188 / DSM 6882 / CCUG 24695 / JCM 21032 / LMG 3331 / NBRC 15819 / NCTC 12168 / Alc 37) (Ochrobactrum anthropi).